We begin with the raw amino-acid sequence, 124 residues long: Small ribosomal subunit protein bS6 (124 aa).

The segment at 98–124 (EASPMLKAREERPRREDVREEAEEAAE) is disordered. Residues 104–115 (KAREERPRREDV) are compositionally biased toward basic and acidic residues.

This sequence belongs to the bacterial ribosomal protein bS6 family.

Binds together with bS18 to 16S ribosomal RNA. In Tolumonas auensis (strain DSM 9187 / NBRC 110442 / TA 4), this protein is Small ribosomal subunit protein bS6.